A 559-amino-acid chain; its full sequence is MKVITCEIAWHNKEPVYSLDFQHGTAGRIHRLASAGVDTNVRIWKVEKGPDGKAIVEFLSNLARHTKAVNVVRFSPTGEILASGGDDAVILLWKVNDNKEPEQIAFQDEDEAQLNKENWTVVKTLRGHLEDVYDICWATDGNLMASASVDNTAIIWDVSKGQKISIFNEHKSYVQGVTWDPLGQYVATLSCDRVLRVYSIQKKRVAFNVSKMLSGIGAEGEARSYRMFHDDSMKSFFRRLSFTPDGSLLLTPAGCVESGENVMNTTYVFSRKNLKRPIAHLPCPGKATLAVRCCPVYFELRPVVETGVELMSLPYRLVFAVASEDSVLLYDTQQSFPFGYVSNIHYHTLSDISWSSDGAFLAISSTDGYCSFVTFEKDELGIPLKEKPVLNMRTPDTAKKTKSQTHRGSSPGPRPVEGTPASRTQDPSSPGTTPPQARQAPAPTVIRDPPSITPAVKSPLPGPSEEKTLQPSSQNTKAHPSRRVTLNTLQAWSKTTPRRINLTPLKTDTPPSSVPTSVISTPSTEEIQSETPGDAQGSPPELKRPRLDENKGGTESLDP.

WD repeat units follow at residues 11 to 54 (HNKE…DGKA), 64 to 103 (RHTK…EPEQ), 127 to 166 (GHLE…KISI), 169 to 208 (EHKS…VAFN), 228 to 279 (FHDD…RPIA), 299 to 340 (ELRP…PFGY), and 344 to 385 (IHYH…IPLK). Residues 386-559 (EKPVLNMRTP…NKGGTESLDP (174 aa)) form a disordered region. Position 394 is a phosphothreonine (T394). Residue S409 is modified to Phosphoserine. T419 carries the post-translational modification Phosphothreonine. S429 bears the Phosphoserine mark. Positions 430–444 (PGTTPPQARQAPAPT) are enriched in low complexity. Phosphothreonine is present on T433. S458 carries the phosphoserine modification. Polar residues predominate over residues 469 to 495 (LQPSSQNTKAHPSRRVTLNTLQAWSKT). N6-acetyllysine is present on K494. Phosphothreonine is present on residues T495, T509, T521, and T531. Low complexity predominate over residues 509 to 526 (TPPSSVPTSVISTPSTEE). A Phosphoserine modification is found at S538. Positions 541-552 (ELKRPRLDENKG) are enriched in basic and acidic residues.

It belongs to the WD repeat HIR1 family. Subunit of the CAF-1 complex that contains RBBP4, CHAF1B and CHAF1A. CHAF1A binds directly to CHAF1B. Only minor amounts of RBBP4 are complexed with CHAF1A and CHAF1B in G1 phase. In G2 and S phase also monomeric CHAF1B is detected. Interacts with histones H3.1, H3.2 and H3.1t. Post-translationally, differentially phosphorylated during cell cycle. During mitosis the p60 subunit of inactive CAF-1 is hyperphosphorylated and displaced into the cytosol. Progressivly dephosphorylated from G1 to S and G2 phase. Phosphorylated p60 is recruited to chromatin undergoing DNA repair after UV irradiation in G1, S or G2 phases.

Its subcellular location is the nucleus. The protein resides in the cytoplasm. Its function is as follows. Acts as a component of the histone chaperone complex chromatin assembly factor 1 (CAF-1), which assembles histone octamers onto DNA during replication and repair. CAF-1 performs the first step of the nucleosome assembly process, bringing newly synthesized histones H3 and H4 to replicating DNA; histones H2A/H2B can bind to this chromatin precursor subsequent to DNA replication to complete the histone octamer. This is Chromatin assembly factor 1 subunit B from Homo sapiens (Human).